The chain runs to 447 residues: FAD-dependent monooxygenase tropB (447 aa).

Residues 12-32 (PLSVGIVGGGIIGVILAAGLV) form a helical membrane-spanning segment. Residues E42, A55, and R124 each contribute to the FAD site. N153 carries N-linked (GlcNAc...) asparagine glycosylation. Residues R206 and Y239 contribute to the active site. An N-linked (GlcNAc...) asparagine glycan is attached at N243. Residues D322 and A335 each coordinate FAD.

Belongs to the paxM FAD-dependent monooxygenase family. FAD serves as cofactor.

The protein resides in the membrane. It participates in secondary metabolite biosynthesis. Its function is as follows. FAD-dependent monooxygenase; part of the gene cluster that mediates the biosynthesis of the tropolone class of fungal maleic anhydrides. Within the pathway, tropB catalyzes a synthetically challenging asymmetric oxidative dearomatization reaction to convert 3-methylorcinaldehyde into a hydroxycyclohexadione. The pathway begins with the synthesis of 3-methylorcinaldehyde by the non-reducing polyketide synthase (PKS) tropA. 3-methylorcinaldehyde is the substrate for the FAD-dependent monooxygenase tropB to yield a dearomatized hydroxycyclohexadione. The 2-oxoglutarate-dependent dioxygenase tropC then performs the oxidative ring expansion to provide the first tropolone metabolite stipitaldehyde. Trop D converts stipitaldehyde into stipitacetal which is in turn converted to stipitalide by the short-chain dehydrogenase/reductase tropE. The next steps involve tropF, tropG, tropH, tropI and tropJ to form successive tropolone maleic anhydrides including stipitaldehydic, stipitatonic and stipitatic acids. The chain is FAD-dependent monooxygenase tropB from Talaromyces stipitatus (strain ATCC 10500 / CBS 375.48 / QM 6759 / NRRL 1006) (Penicillium stipitatum).